The primary structure comprises 272 residues: Troponin T, fast skeletal muscle (272 aa).

A compositionally biased stretch (acidic residues) spans M1–E50. Residues M1–K75 form a disordered region. S2 is subject to N-acetylserine. Residue S2 is modified to Phosphoserine. A compositionally biased stretch (basic and acidic residues) spans P63–K75. A Phosphoserine modification is found at S91. Residues R114–K156 are compositionally biased toward basic and acidic residues. A disordered region spans residues R114–L193. Phosphoserine is present on residues S162, S169, and S170. Over residues T184–L193 the composition is skewed to basic and acidic residues. S206 carries the phosphoserine modification. Position 222 is a phosphotyrosine (Y222). The segment at R248 to K272 is disordered.

This sequence belongs to the troponin T family. As to expression, expressed predominantly in skeletal muscle.

Troponin T is the tropomyosin-binding subunit of troponin, the thin filament regulatory complex which confers calcium-sensitivity to striated muscle actomyosin ATPase activity. The protein is Troponin T, fast skeletal muscle (Tnnt3) of Mus musculus (Mouse).